The primary structure comprises 253 residues: MTFEIVFDSAREFESLIATLEKFFDEAVFQVNMEGIQMRAIDPSRVVLVDLNLPEMLFSKYSVESEEAIAFDLKRFLKVLKLARSRDTLVLRKGGENFLEVGLLGDENTWFKLPLIDANTPEIEIPSLPWTVKAVVLAGALKRAVKAAKLVSDSIYFMATPEKLTFKAEGNDSEVRTVLTMEDPGLLDLEHKMTKAKSAYGVAYLEDILRSLADADEVIIRFGFDIPLLLKYMVRDAGEVSFLIAPRVEEGRS.

The protein belongs to the PCNA family. As to quaternary structure, homotrimer. The subunits circularize to form a toroid; DNA passes through its center. Replication factor C (RFC) is required to load the toroid on the DNA. Interacts with TIP.

Inhibited by interaction with the PCNA inhibitor TIP. Its function is as follows. Sliding clamp subunit that acts as a moving platform for DNA processing. Responsible for tethering the catalytic subunit of DNA polymerase and other proteins to DNA during high-speed replication. The chain is DNA polymerase sliding clamp 2 from Thermococcus kodakarensis (strain ATCC BAA-918 / JCM 12380 / KOD1) (Pyrococcus kodakaraensis (strain KOD1)).